An 85-amino-acid chain; its full sequence is Putative septation protein SpoVG (85 aa).

Belongs to the SpoVG family.

In terms of biological role, could be involved in septation. The polypeptide is Putative septation protein SpoVG (Archaeoglobus fulgidus (strain ATCC 49558 / DSM 4304 / JCM 9628 / NBRC 100126 / VC-16)).